The primary structure comprises 600 residues: Integrator complex subunit 11 (600 aa).

Zn(2+)-binding residues include His-68, His-70, Asp-72, His-73, His-157, and Asp-178. Positions 68–73 (HFHLDH) match the HXHXDH motif motif. The active site involves Glu-203. Residue Lys-381 forms a Glycyl lysine isopeptide (Lys-Gly) (interchain with G-Cter in SUMO) linkage. His-414 lines the Zn(2+) pocket. Glycyl lysine isopeptide (Lys-Gly) (interchain with G-Cter in SUMO) cross-links involve residues Lys-462 and Lys-475. A Nuclear localization signal motif is present at residues 469–479 (LLPEAKKPRLL).

Belongs to the metallo-beta-lactamase superfamily. RNA-metabolizing metallo-beta-lactamase-like family. INTS11 subfamily. As to quaternary structure, component of the Integrator complex, composed of core subunits INTS1, INTS2, INTS3, INTS4, INTS5, INTS6, INTS7, INTS8, INTS9/RC74, INTS10, INTS11/CPSF3L, INTS12, INTS13, INTS14 and INTS15. The core complex associates with protein phosphatase 2A subunits PPP2CA and PPP2R1A, to form the Integrator-PP2A (INTAC) complex. INTS11 is part of the RNA endonuclease subcomplex, composed of INTS4, INTS9, INTS11 and inositol hexakisphosphate (InsP6). Interacts with WDR73; interaction is required for the assembly of the RNA endonuclease subcomplex in the cytoplasm. Interacts with BRAT1; interaction is required for the assembly of the RNA endonuclease subcomplex and inhibits the endonuclease activity of INTS11 before formation of mature integrator complex. It depends on Zn(2+) as a cofactor. Post-translationally, sumoylated; sumoylation regulates its subcellular location and is required for integrator complex integrity.

It localises to the nucleus. The protein localises to the cytoplasm. Its activity is regulated as follows. The RNA endonuclease activity is inhibited by BRAT1 that forms hyrogen bond and hydrophobic interactions with the active site. Its function is as follows. RNA endonuclease component of the integrator complex, a multiprotein complex that terminates RNA polymerase II (Pol II) transcription in the promoter-proximal region of genes. The integrator complex provides a quality checkpoint during transcription elongation by driving premature transcription termination of transcripts that are unfavorably configured for transcriptional elongation: the complex terminates transcription by (1) catalyzing dephosphorylation of the C-terminal domain (CTD) of Pol II subunit POLR2A/RPB1 and SUPT5H/SPT5, (2) degrading the exiting nascent RNA transcript via endonuclease activity and (3) promoting the release of Pol II from bound DNA. The integrator complex is also involved in terminating the synthesis of non-coding Pol II transcripts, such as enhancer RNAs (eRNAs), small nuclear RNAs (snRNAs), telomerase RNAs and long non-coding RNAs (lncRNAs). Within the integrator complex, INTS11 constitutes the RNA endonuclease subunit that degrades exiting nascent RNA transcripts. Mediates recruitment of cytoplasmic dynein to the nuclear envelope, probably as component of the integrator complex. This is Integrator complex subunit 11 (INTS11) from Pongo abelii (Sumatran orangutan).